The sequence spans 560 residues: Chaperonin GroEL 2 (560 aa).

Residues 29–32, 86–90, Gly-413, 478–480, and Asp-494 contribute to the ATP site; these read TLGP, DGTTT, and NAA.

This sequence belongs to the chaperonin (HSP60) family. In terms of assembly, forms a cylinder of 14 subunits composed of two heptameric rings stacked back-to-back. Interacts with the co-chaperonin GroES.

Its subcellular location is the cytoplasm. It carries out the reaction ATP + H2O + a folded polypeptide = ADP + phosphate + an unfolded polypeptide.. Its function is as follows. Together with its co-chaperonin GroES, plays an essential role in assisting protein folding. The GroEL-GroES system forms a nano-cage that allows encapsulation of the non-native substrate proteins and provides a physical environment optimized to promote and accelerate protein folding. The chain is Chaperonin GroEL 2 from Trichormus variabilis (strain ATCC 29413 / PCC 7937) (Anabaena variabilis).